Consider the following 367-residue polypeptide: PR domain zinc finger protein 12 (367 aa).

The SET domain occupies Ala-86–Gly-203. 3 C2H2-type zinc fingers span residues Met-243 to His-265, Phe-271 to His-293, and Tyr-299 to His-323. The segment at Gln-318–Leu-337 is disordered.

It belongs to the class V-like SAM-binding methyltransferase superfamily. As to quaternary structure, interacts with EHMT2. As to expression, not found in adult tissues except in dorsal root ganglia.

It localises to the nucleus. In terms of biological role, transcriptional regulator necessary for the development of nociceptive neurons, playing a key role in determining the nociceptive lineage from neural crest cell progenitors. Initiates neurogenesis and activates downstream pro-neuronal transcription factors, such as NEUROD1, BRN3A, and ISL1, specifically within nociceptive neurons, while repressing non-nociceptor cell fates. Essential for the proper function of nociceptors in adults, influencing both their excitability and their gene expression, thereby impacting how these neurons respond to various pain stimuli. This Homo sapiens (Human) protein is PR domain zinc finger protein 12 (PRDM12).